A 262-amino-acid polypeptide reads, in one-letter code: tRNA pseudouridine synthase A (262 aa).

D51 functions as the Nucleophile in the catalytic mechanism. Y109 lines the substrate pocket.

It belongs to the tRNA pseudouridine synthase TruA family. Homodimer.

It carries out the reaction uridine(38/39/40) in tRNA = pseudouridine(38/39/40) in tRNA. Functionally, formation of pseudouridine at positions 38, 39 and 40 in the anticodon stem and loop of transfer RNAs. In Legionella pneumophila (strain Paris), this protein is tRNA pseudouridine synthase A.